Reading from the N-terminus, the 314-residue chain is CD-NTase-associated protein 12 (314 aa).

In terms of domain architecture, TIR spans 5–129; that stretch reads RIFIGSSSEE…VKGISLARFK (125 aa). The segment at 160 to 314 is STING domain; it reads SSTLAAVYYE…DLIKIVDEDN (155 aa). 3 residues coordinate 3',3'-c-di-GMP: F171, P234, and D252.

In the C-terminal section; belongs to the bacterial STING family. As to quaternary structure, homodimer. Forms homodimers; in the presence of c-di-GMP forms filaments with an ordered array of parallel-stacked subunits.

The catalysed reaction is NAD(+) + H2O = ADP-D-ribose + nicotinamide + H(+). Its activity is regulated as follows. NAD(+) hydrolase activity is strongly stimulated by c-di-GMP, weakly by 3'3'-cGAMP, very weakly by c-di-AMP but not at all by 2'3'-cGAMP. Self-association of TIR domains is required for NADase activity. Its function is as follows. Effector protein of a CBASS antiviral system with NAD(+) hydrolase activity. CBASS (cyclic oligonucleotide-based antiphage signaling system) provides immunity against bacteriophage. The CD-NTase protein synthesizes cyclic nucleotides in response to infection; these serve as specific second messenger signals. The signals activate a diverse range of effectors, leading to bacterial cell death and thus abortive phage infection. A type I-(GG) CBASS system. Binds c-di-GMP (synthesized by the cognate CdnE encoded upstream in the same operon), and about 10-fold less well 3'3'-cGAMP, but not c-di-AMP, 2'-3'-cGAMP or cUMP-AMP (tested without the N-terminal TIR domain). Upon activation by c-di-GMP forms filaments which hydrolyze NAD(+); filament formation is required for enzyme activation. In Capnocytophaga granulosa (strain ATCC 51502 / DSM 11449 / JCM 8566 / LMG 16022 / NCTC 12948 / B0611), this protein is CD-NTase-associated protein 12.